A 110-amino-acid polypeptide reads, in one-letter code: UPF0060 membrane protein Pnap_4944 (110 aa).

The next 4 helical transmembrane spans lie at Ile-8–Leu-28, Ser-33–Leu-53, Tyr-65–Leu-85, and Trp-88–Ser-108.

It belongs to the UPF0060 family.

It is found in the cell inner membrane. The sequence is that of UPF0060 membrane protein Pnap_4944 from Polaromonas naphthalenivorans (strain CJ2).